Here is a 456-residue protein sequence, read N- to C-terminus: Gamma-glutamyl phosphate reductase (456 aa).

It belongs to the gamma-glutamyl phosphate reductase family.

It is found in the cytoplasm. It carries out the reaction L-glutamate 5-semialdehyde + phosphate + NADP(+) = L-glutamyl 5-phosphate + NADPH + H(+). Its pathway is amino-acid biosynthesis; L-proline biosynthesis; L-glutamate 5-semialdehyde from L-glutamate: step 2/2. Functionally, catalyzes the NADPH-dependent reduction of L-glutamate 5-phosphate into L-glutamate 5-semialdehyde and phosphate. The product spontaneously undergoes cyclization to form 1-pyrroline-5-carboxylate. The chain is Gamma-glutamyl phosphate reductase from Haloquadratum walsbyi (strain DSM 16790 / HBSQ001).